Consider the following 343-residue polypeptide: Tetraacyldisaccharide 4'-kinase (343 aa).

Position 65–72 (65–72 (HAGGTGKT)) interacts with ATP.

The protein belongs to the LpxK family.

The catalysed reaction is a lipid A disaccharide + ATP = a lipid IVA + ADP + H(+). It participates in glycolipid biosynthesis; lipid IV(A) biosynthesis; lipid IV(A) from (3R)-3-hydroxytetradecanoyl-[acyl-carrier-protein] and UDP-N-acetyl-alpha-D-glucosamine: step 6/6. Its function is as follows. Transfers the gamma-phosphate of ATP to the 4'-position of a tetraacyldisaccharide 1-phosphate intermediate (termed DS-1-P) to form tetraacyldisaccharide 1,4'-bis-phosphate (lipid IVA). The polypeptide is Tetraacyldisaccharide 4'-kinase (Neisseria gonorrhoeae (strain ATCC 700825 / FA 1090)).